Consider the following 925-residue polypeptide: Aspulvinone E synthetase melA (925 aa).

Residues 11-434 (ETAAARNGDG…GGRAKETIII (424 aa)) form an adenylation (A) domain region. In terms of domain architecture, Carrier spans 564–644 (SPKNDFEKGL…ELAAALDNLY (81 aa)). Residue Ser601 is modified to O-(pantetheine 4'-phosphoryl)serine. The segment at 663–923 (PLWLVHPGAG…KILRSALAER (261 aa)) is thioesterase (TE) domain.

Belongs to the NRP synthetase family.

The protein resides in the cytoplasm. It catalyses the reaction 2 3-(4-hydroxyphenyl)pyruvate + AH2 + 2 ATP + O2 = aspulvinone E + A + 2 AMP + CO2 + 2 diphosphate + H2O + H(+). In terms of biological role, nonribosomal peptide synthase; part of the gene cluster that mediates the biosynthesis of Asp-melanin, a pigment that confers resistance against UV light and hampers phagocytosis by soil amoeba. The nonribosomal peptide synthase melA converts 4-hydroxyphenylpyruvate (4-HPPA) to aspulvinone E. The tyrosinase tyrP then performs hydroxylations of both aromatic moieties of aspulvinone E. The product of tyrP is highly unstable, and, due to the high reactivity of methides and ortho-diquinones, the polymeric Asp-melanin forms spontaneously. This Aspergillus terreus (strain NIH 2624 / FGSC A1156) protein is Aspulvinone E synthetase melA.